The sequence spans 362 residues: MLCVNVELQERRYPILIGSGLLQDERSYPIKRGDRVMIVTNPTVAQFYLDTVIYALEKRGCVVDHVLLPDGEKYKTLESLNLIFTALLQGNHGRDTTIIALGGGVIGDVAGFAAASYQRGVRLIQIPTTLLSQVDSSVGGKTAVNHELGKNMIGAFYQPSMVIIDTLTLNTLPKREVNAGLAEVIKYGAILDYEFFEWLEQHIDELVALHPEALQHCISRCCQIKADVVARDETEKGDRALLNLGHTFGHAIETHLGYGNWLHGEAVSTGMMMAAALSEELGDISIADVSRLEKLLARANLPTVSPDTMQPEDYLPHMMRDKKVLSGKLRLVLLKSLGQAYVANDTEHTLVLNAIRRCTQTD.

Residues 70–75, 104–108, 128–129, Lys141, Lys150, and 168–171 contribute to the NAD(+) site; these read DGEKYK, GVIGD, TT, and TLNT. Residues Glu183, His246, and His263 each contribute to the Zn(2+) site.

It belongs to the sugar phosphate cyclases superfamily. Dehydroquinate synthase family. NAD(+) is required as a cofactor. Requires Co(2+) as cofactor. It depends on Zn(2+) as a cofactor.

The protein resides in the cytoplasm. It catalyses the reaction 7-phospho-2-dehydro-3-deoxy-D-arabino-heptonate = 3-dehydroquinate + phosphate. Its pathway is metabolic intermediate biosynthesis; chorismate biosynthesis; chorismate from D-erythrose 4-phosphate and phosphoenolpyruvate: step 2/7. Catalyzes the conversion of 3-deoxy-D-arabino-heptulosonate 7-phosphate (DAHP) to dehydroquinate (DHQ). The sequence is that of 3-dehydroquinate synthase from Haemophilus influenzae (strain ATCC 51907 / DSM 11121 / KW20 / Rd).